A 189-amino-acid polypeptide reads, in one-letter code: Ras-like protein 1 (189 aa).

GTP is bound at residue G10 to S17. The Effector region signature appears at Y32–Y40. GTP-binding positions include D57–Q61 and N116–D119. C186 carries the cysteine methyl ester modification. C186 is lipidated: S-geranylgeranyl cysteine. Positions K187 to L189 are cleaved as a propeptide — removed in mature form.

It belongs to the small GTPase superfamily. Ras family.

The protein localises to the cell membrane. It carries out the reaction GTP + H2O = GDP + phosphate + H(+). Its activity is regulated as follows. Alternates between an inactive form bound to GDP and an active form bound to GTP. Activated by a guanine nucleotide-exchange factor (GEF) and inactivated by a GTPase-activating protein (GAP). In terms of biological role, ras proteins bind GDP/GTP and possess intrinsic GTPase activity. Plays a role in eye development by regulating cell growth, survival of postmitotic ommatidial cells and differentiation of photoreceptor cells. During larval development, mediates Ptth/tor signaling leading to the production of ecdysone, a hormone required for the initiation of metamorphosis. This chain is Ras-like protein 1, found in Drosophila virilis (Fruit fly).